Consider the following 170-residue polypeptide: Acireductone dioxygenase (170 aa).

Fe(2+) is bound by residues His-99, His-101, Glu-105, and His-144. Ni(2+) contacts are provided by His-99, His-101, Glu-105, and His-144.

It belongs to the acireductone dioxygenase (ARD) family. In terms of assembly, monomer. Fe(2+) is required as a cofactor. It depends on Ni(2+) as a cofactor.

The catalysed reaction is 1,2-dihydroxy-5-(methylsulfanyl)pent-1-en-3-one + O2 = 3-(methylsulfanyl)propanoate + CO + formate + 2 H(+). It catalyses the reaction 1,2-dihydroxy-5-(methylsulfanyl)pent-1-en-3-one + O2 = 4-methylsulfanyl-2-oxobutanoate + formate + 2 H(+). Its pathway is amino-acid biosynthesis; L-methionine biosynthesis via salvage pathway; L-methionine from S-methyl-5-thio-alpha-D-ribose 1-phosphate: step 5/6. In terms of biological role, catalyzes 2 different reactions between oxygen and the acireductone 1,2-dihydroxy-3-keto-5-methylthiopentene (DHK-MTPene) depending upon the metal bound in the active site. Fe-containing acireductone dioxygenase (Fe-ARD) produces formate and 2-keto-4-methylthiobutyrate (KMTB), the alpha-ketoacid precursor of methionine in the methionine recycle pathway. Ni-containing acireductone dioxygenase (Ni-ARD) produces methylthiopropionate, carbon monoxide and formate, and does not lie on the methionine recycle pathway. This is Acireductone dioxygenase from Bacillus anthracis.